The following is a 457-amino-acid chain: Glycerol-3-phosphate acyltransferase 3 (457 aa).

A helical membrane pass occupies residues W14–I34. Phosphoserine is present on residues S68 and S77. The next 2 helical transmembrane spans lie at I137–L157 and V161–L181. An HXXXXD motif motif is present at residues H229–D234. Residues G429 to L457 form a disordered region. Residues G431–N444 show a composition bias toward polar residues.

It belongs to the 1-acyl-sn-glycerol-3-phosphate acyltransferase family.

The protein localises to the endoplasmic reticulum membrane. The enzyme catalyses sn-glycerol 3-phosphate + an acyl-CoA = a 1-acyl-sn-glycero-3-phosphate + CoA. It catalyses the reaction a 1-acyl-sn-glycero-3-phosphate + an acyl-CoA = a 1,2-diacyl-sn-glycero-3-phosphate + CoA. It carries out the reaction dodecanoyl-CoA + sn-glycerol 3-phosphate = 1-dodecanoyl-sn-glycerol 3-phosphate + CoA. The catalysed reaction is sn-glycerol 3-phosphate + hexadecanoyl-CoA = 1-hexadecanoyl-sn-glycero-3-phosphate + CoA. The enzyme catalyses sn-glycerol 3-phosphate + (9Z)-octadecenoyl-CoA = 1-(9Z-octadecenoyl)-sn-glycero-3-phosphate + CoA. It catalyses the reaction (9Z,12Z)-octadecadienoyl-CoA + sn-glycerol 3-phosphate = 1-(9Z,12Z)-octadecadienoyl-sn-glycero-3-phosphate + CoA. It carries out the reaction 1-tetradecanoyl-sn-glycerol 3-phosphate + (9Z)-octadecenoyl-CoA = 1-tetradecanoyl-2-(9Z)-octadecenoyl-sn-glycero-3-phosphate + CoA. The catalysed reaction is 1-hexadecanoyl-sn-glycero-3-phosphate + (9Z)-octadecenoyl-CoA = 1-hexadecanoyl-2-(9Z-octadecenoyl)-sn-glycero-3-phosphate + CoA. The enzyme catalyses 1-(9Z-octadecenoyl)-sn-glycero-3-phosphate + (9Z)-octadecenoyl-CoA = 1,2-di-(9Z-octadecenoyl)-sn-glycero-3-phosphate + CoA. It catalyses the reaction 1-(6Z,9Z,12Z-octadecatrienoyl)-sn-glycero-3-phosphate + (9Z)-octadecenoyl-CoA = (6Z,9Z,12Z)-octadecatrienoyl-2-(9Z)-octadecenoyl-sn-glycero-3-phosphate + CoA. It carries out the reaction 1-(9Z,12Z,15Z)-octadecatrienoyl-sn-glycero-3-phosphate + (9Z)-octadecenoyl-CoA = 1-(9Z,12Z,15Z)-octadecatrienoyl-2-(9Z)-octadecenoyl-sn-glycero-3-phosphate + CoA. The catalysed reaction is 1-(9Z-octadecenoyl)-sn-glycero-3-phosphate + tetradecanoyl-CoA = 1-(9Z)-octadecenoyl-2-tetradecanoyl-sn-glycero-3-phosphate + CoA. The enzyme catalyses 1-(9Z-octadecenoyl)-sn-glycero-3-phosphate + hexadecanoyl-CoA = 1-(9Z)-octadecenoyl-2-hexadecanoyl-sn-glycero-3-phosphate + CoA. It catalyses the reaction 1-(9Z-octadecenoyl)-sn-glycero-3-phosphate + octadecanoyl-CoA = 1-(9Z-octadecenoyl)-2-octadecanoyl-sn-glycero-3-phosphate + CoA. It carries out the reaction 1-(9Z-octadecenoyl)-sn-glycero-3-phosphate + (9Z,12Z)-octadecadienoyl-CoA = 1-(9Z)-octadecenoyl-2-(9Z,12Z)-octadecadienoyl-sn-glycero-3-phosphate + CoA. The catalysed reaction is 1-(5Z,8Z,11Z,14Z-eicosatetraenoyl)-sn-glycero-3-phosphate + (9Z)-octadecenoyl-CoA = 1-(5Z,8Z,11Z,14Z)-eicosatetraenoyl-2-(9Z)-octadecenoyl-sn-glycero-3-phosphate + CoA. The protein operates within glycerolipid metabolism; triacylglycerol biosynthesis. Its pathway is phospholipid metabolism; CDP-diacylglycerol biosynthesis; CDP-diacylglycerol from sn-glycerol 3-phosphate: step 1/3. Converts glycerol-3-phosphate to 1-acyl-sn-glycerol-3-phosphate (lysophosphatidic acid or LPA) by incorporating an acyl moiety at the sn-1 position of the glycerol backbone. Also converts LPA into 1,2-diacyl-sn-glycerol-3-phosphate (phosphatidic acid or PA) by incorporating an acyl moiety at the sn-2 position of the glycerol backbone. Protects cells against lipotoxicity. The sequence is that of Glycerol-3-phosphate acyltransferase 3 from Rattus norvegicus (Rat).